The primary structure comprises 185 residues: Ribosome-recycling factor (185 aa).

This sequence belongs to the RRF family.

It localises to the cytoplasm. In terms of biological role, responsible for the release of ribosomes from messenger RNA at the termination of protein biosynthesis. May increase the efficiency of translation by recycling ribosomes from one round of translation to another. This Chloroflexus aurantiacus (strain ATCC 29364 / DSM 637 / Y-400-fl) protein is Ribosome-recycling factor.